Consider the following 145-residue polypeptide: [Ribosomal protein bS18]-alanine N-acetyltransferase (145 aa).

One can recognise an N-acetyltransferase domain in the interval 1–145; sequence MIETIVEQDF…ENAVIMALYL (145 aa). Residue 67-69 participates in acetyl-CoA binding; it reads LAV. Catalysis depends on Glu101, which acts as the Proton acceptor. Acetyl-CoA is bound at residue Asn106. Tyr113 serves as the catalytic Proton donor.

This sequence belongs to the acetyltransferase family. RimI subfamily.

It localises to the cytoplasm. The catalysed reaction is N-terminal L-alanyl-[ribosomal protein bS18] + acetyl-CoA = N-terminal N(alpha)-acetyl-L-alanyl-[ribosomal protein bS18] + CoA + H(+). Acetylates the N-terminal alanine of ribosomal protein bS18. This Haemophilus ducreyi (strain 35000HP / ATCC 700724) protein is [Ribosomal protein bS18]-alanine N-acetyltransferase.